The sequence spans 360 residues: Mannose-1-phosphate guanylyltransferase catalytic subunit beta (360 aa).

The interval 2 to 222 (KALILVGGYG…QGFWMDIGQP (221 aa)) is substrate-binding domain. Residue Asp110 coordinates GDP-alpha-D-mannose. Asp110 serves as a coordination point for Mg(2+). The active site involves Lys162. Position 218 (Asp218) interacts with GDP-alpha-D-mannose. Asp218 serves as a coordination point for Mg(2+). The interval 245-360 (HVGPGFIGNV…ESVPEPRIIM (116 aa)) is hexapeptide repeat domain.

This sequence belongs to the transferase hexapeptide repeat family. Component of the GMPPA-GMPPB mannose-1-phosphate guanylyltransferase complex composed of 4 gmppa subunits and 8 gmppb subunits; the complex is organized into three layers, a central layer made up of 2 gmppa dimers sandwiched between two layers each made up of 2 gmppb dimers. Catalytic activity of gmppb is reduced when part of the complex and binding of GDP-alpha-D-Mannose by gmppa induces allosteric feedback inhibition of gmppb. Mg(2+) serves as cofactor.

The enzyme catalyses alpha-D-mannose 1-phosphate + GTP + H(+) = GDP-alpha-D-mannose + diphosphate. Its pathway is nucleotide-sugar biosynthesis; GDP-alpha-D-mannose biosynthesis; GDP-alpha-D-mannose from alpha-D-mannose 1-phosphate (GTP route): step 1/1. With respect to regulation, enzyme activity is reduced by incorporation into the GMPPA-GMPPB mannose-1-phosphate guanylyltransferase complex. Allosterically inhibited, when part of the GMPPA-GMPPB complex, by GDP-alpha-D-mannose binding to GMPPA. Functionally, catalytic subunit of the GMPPA-GMPPB mannose-1-phosphate guanylyltransferase complex. Catalyzes the formation of GDP-mannose, an essential precursor of glycan moieties of glycoproteins and glycolipids. Can catalyze the reverse reaction in vitro. Together with GMPPA regulates GDP-alpha-D-mannose levels. The polypeptide is Mannose-1-phosphate guanylyltransferase catalytic subunit beta (gmppb) (Xenopus tropicalis (Western clawed frog)).